A 65-amino-acid polypeptide reads, in one-letter code: MPKLKTSKAIAKRFKVSSSGKFLRHKASKSHLLQKKSSKQRRHLSSTCSVDLKDIKNIAMQLPYL.

Residues 25-44 (HKASKSHLLQKKSSKQRRHL) are compositionally biased toward basic residues. Positions 25–45 (HKASKSHLLQKKSSKQRRHLS) are disordered.

It belongs to the bacterial ribosomal protein bL35 family.

It localises to the plastid. The protein resides in the chloroplast. The protein is Large ribosomal subunit protein bL35c of Pyropia yezoensis (Susabi-nori).